Here is a 467-residue protein sequence, read N- to C-terminus: Ribulose bisphosphate carboxylase large chain (467 aa).

N6,N6,N6-trimethyllysine is present on Lys-5. Residues Asn-114 and Thr-164 each contribute to the substrate site. The active-site Proton acceptor is the Lys-166. Lys-168 contributes to the substrate binding site. Residues Lys-192, Asp-194, and Glu-195 each contribute to the Mg(2+) site. Residue Lys-192 is modified to N6-carboxylysine. Residue His-285 is the Proton acceptor of the active site. Residues Arg-286, His-318, and Ser-370 each contribute to the substrate site.

The protein belongs to the RuBisCO large chain family. Type I subfamily. Heterohexadecamer of 8 large chains and 8 small chains; disulfide-linked. The disulfide link is formed within the large subunit homodimers. Mg(2+) is required as a cofactor. Post-translationally, the disulfide bond which can form in the large chain dimeric partners within the hexadecamer appears to be associated with oxidative stress and protein turnover.

The protein localises to the plastid. It is found in the chloroplast. The catalysed reaction is 2 (2R)-3-phosphoglycerate + 2 H(+) = D-ribulose 1,5-bisphosphate + CO2 + H2O. The enzyme catalyses D-ribulose 1,5-bisphosphate + O2 = 2-phosphoglycolate + (2R)-3-phosphoglycerate + 2 H(+). Its function is as follows. RuBisCO catalyzes two reactions: the carboxylation of D-ribulose 1,5-bisphosphate, the primary event in carbon dioxide fixation, as well as the oxidative fragmentation of the pentose substrate in the photorespiration process. Both reactions occur simultaneously and in competition at the same active site. The chain is Ribulose bisphosphate carboxylase large chain from Jasminum simplicifolium subsp. suavissimum (Native jasmine).